A 92-amino-acid chain; its full sequence is Large ribosomal subunit protein bL28 (92 aa).

Belongs to the bacterial ribosomal protein bL28 family.

The sequence is that of Large ribosomal subunit protein bL28 from Borrelia duttonii (strain Ly).